Consider the following 137-residue polypeptide: Drosulfakinins (137 aa).

Positions 1-31 are cleaved as a signal peptide; that stretch reads MGLRSCTHFATLVIPLWALAFCFLVVVPVPA. Positions 32-74 are excised as a propeptide; sequence QTNLQTSKGDRRLQDLESNMGAESDQPNANLVRPSLSRFGDKR. Phe-81 carries the post-translational modification Phenylalanine amide. Residues 85 to 107 constitute a propeptide that is removed on maturation; it reads VPRPMIPIELDLLMDNDDENTKA. The residue at position 113 (Tyr-113) is a Sulfotyrosine. Phe-118 bears the Phenylalanine amide mark. Tyr-130 bears the Sulfotyrosine mark. Phe-135 carries the phenylalanine amide modification.

Belongs to the gastrin/cholecystokinin family.

Its subcellular location is the secreted. In terms of biological role, drosulfakinin-0 (DSK 0) plays diverse biological roles including regulating gut muscle contraction in adults but not in larvae. The chain is Drosulfakinins from Drosophila yakuba (Fruit fly).